A 663-amino-acid polypeptide reads, in one-letter code: UvrABC system protein B (663 aa).

One can recognise a Helicase ATP-binding domain in the interval 31–418 (DNIEGGEKAQ…TDTVVEQIIR (388 aa)). ATP is bound at residue 44–51 (GATGTGKT). Positions 97 to 120 (YYDYYQPEAYVPSSDTYIEKDSSV) match the Beta-hairpin motif. The 167-residue stretch at 435 to 601 (QMDDLLGEIN…TIKKEIRDLI (167 aa)) folds into the Helicase C-terminal domain. A UVR domain is found at 627 to 662 (QAEIKALQKQMQEAAELLDFELAAQIRDVILKLKAI).

Belongs to the UvrB family. As to quaternary structure, forms a heterotetramer with UvrA during the search for lesions. Interacts with UvrC in an incision complex.

It localises to the cytoplasm. Its function is as follows. The UvrABC repair system catalyzes the recognition and processing of DNA lesions. A damage recognition complex composed of 2 UvrA and 2 UvrB subunits scans DNA for abnormalities. Upon binding of the UvrA(2)B(2) complex to a putative damaged site, the DNA wraps around one UvrB monomer. DNA wrap is dependent on ATP binding by UvrB and probably causes local melting of the DNA helix, facilitating insertion of UvrB beta-hairpin between the DNA strands. Then UvrB probes one DNA strand for the presence of a lesion. If a lesion is found the UvrA subunits dissociate and the UvrB-DNA preincision complex is formed. This complex is subsequently bound by UvrC and the second UvrB is released. If no lesion is found, the DNA wraps around the other UvrB subunit that will check the other stand for damage. The polypeptide is UvrABC system protein B (Streptococcus agalactiae serotype Ia (strain ATCC 27591 / A909 / CDC SS700)).